The following is a 247-amino-acid chain: ATP synthase subunit a, chloroplastic (247 aa).

Helical transmembrane passes span Gln-38–Val-58, Val-95–Leu-115, Ile-134–Ser-154, Leu-199–Leu-219, and Gly-220–Gly-240.

The protein belongs to the ATPase A chain family. As to quaternary structure, F-type ATPases have 2 components, CF(1) - the catalytic core - and CF(0) - the membrane proton channel. CF(1) has five subunits: alpha(3), beta(3), gamma(1), delta(1), epsilon(1). CF(0) has four main subunits: a, b, b' and c.

It localises to the plastid. The protein resides in the chloroplast thylakoid membrane. Functionally, key component of the proton channel; it plays a direct role in the translocation of protons across the membrane. In Zea mays (Maize), this protein is ATP synthase subunit a, chloroplastic.